Consider the following 128-residue polypeptide: Fluoride-specific ion channel FluC (128 aa).

4 consecutive transmembrane segments (helical) span residues 4 to 24 (VFLLIIGGAIGSALRFGVSTW), 35 to 55 (FGILSVNVIGSFLIGFCWSIA), 67 to 87 (FLFTGLFGGFTTFSSFALDTM), and 99 to 119 (LLNVLASNILGLIAVFLGIIL). Residues glycine 74 and threonine 77 each contribute to the Na(+) site.

It belongs to the fluoride channel Fluc/FEX (TC 1.A.43) family.

The protein resides in the cell inner membrane. The enzyme catalyses fluoride(in) = fluoride(out). Its activity is regulated as follows. Na(+) is not transported, but it plays an essential structural role and its presence is essential for fluoride channel function. Its function is as follows. Fluoride-specific ion channel. Important for reducing fluoride concentration in the cell, thus reducing its toxicity. The sequence is that of Fluoride-specific ion channel FluC from Parabacteroides distasonis (strain ATCC 8503 / DSM 20701 / CIP 104284 / JCM 5825 / NCTC 11152).